We begin with the raw amino-acid sequence, 301 residues long: Protein RESTRICTED TEV MOVEMENT 3 (301 aa).

The 129-residue stretch at 6–134 (DKKITWTIKN…NGELKIVVEI (129 aa)) folds into the MATH domain. The stretch at 235 to 289 (KLDWLEKKLYEVSEKKENEEASETGLQEMEEELKDMKQKCLEMEALVEKEKAKVS) forms a coiled coil.

In terms of assembly, self-interacts. Interacts with RTM1.

Required for the restriction of long-distance movement of the pathogenic tobacco etch virus (TEV) without causing a hypersensitive response or inducing systemic acquired resistance. The sequence is that of Protein RESTRICTED TEV MOVEMENT 3 (RTM3) from Arabidopsis thaliana (Mouse-ear cress).